Here is a 280-residue protein sequence, read N- to C-terminus: Gem-associated protein 2 (280 aa).

The interval 1 to 39 (MRRAELAGLKTMAWVPAESAVEELMPRLLPVEPCDLTEG) is may play a minor inhibitory role in snRNA binding to 5Sm (SNRPD1, SNRPD2, SNRPE, SNRPF and SNRPG) during snRNP assembly by inserting into the RNA binding pocket of 5Sm. Phosphoserine occurs at positions 81 and 166.

The protein belongs to the gemin-2 family. In terms of assembly, monomer. Part of the core SMN complex that contains SMN1, GEMIN2/SIP1, DDX20/GEMIN3, GEMIN4, GEMIN5, GEMIN6, GEMIN7, GEMIN8 and STRAP/UNRIP. Part of the SMN-Sm complex that contains SMN1, GEMIN2/SIP1, DDX20/GEMIN3, GEMIN4, GEMIN5, GEMIN6, GEMIN7, GEMIN8, STRAP/UNRIP and the Sm proteins SNRPB, SNRPD1, SNRPD2, SNRPD3, SNRPE, SNRPF and SNRPG. Interacts with GEMIN5; the interaction is direct. Interacts (via C-terminus) with SMN1; the interaction is direct. Interacts with SNRPD1; the interaction is direct. Interacts with SNRPD2; the interaction is direct. Interacts (via N-terminus) with SNRPF; the interaction is direct. Interacts (via N-terminus) with SNRPE; the interaction is direct. Interacts (via N-terminus) with SNRPG; the interaction is direct.

It is found in the nucleus. The protein resides in the gem. The protein localises to the cytoplasm. Its function is as follows. The SMN complex catalyzes the assembly of small nuclear ribonucleoproteins (snRNPs), the building blocks of the spliceosome, and thereby plays an important role in the splicing of cellular pre-mRNAs. Most spliceosomal snRNPs contain a common set of Sm proteins SNRPB, SNRPD1, SNRPD2, SNRPD3, SNRPE, SNRPF and SNRPG that assemble in a heptameric protein ring on the Sm site of the small nuclear RNA to form the core snRNP (Sm core). In the cytosol, the Sm proteins SNRPD1, SNRPD2, SNRPE, SNRPF and SNRPG (5Sm) are trapped in an inactive 6S pICln-Sm complex by the chaperone CLNS1A that controls the assembly of the core snRNP. To assemble core snRNPs, the SMN complex accepts the trapped 5Sm proteins from CLNS1A. Binding of snRNA inside 5Sm ultimately triggers eviction of the SMN complex, thereby allowing binding of SNRPD3 and SNRPB to complete assembly of the core snRNP. Within the SMN complex, GEMIN2 constrains the conformation of 5Sm, thereby promoting 5Sm binding to snRNA containing the snRNP code (a nonameric Sm site and a 3'-adjacent stem-loop), thus preventing progression of assembly until a cognate substrate is bound. This is Gem-associated protein 2 from Homo sapiens (Human).